Here is a 171-residue protein sequence, read N- to C-terminus: Secreted thaumatin-like protein calA (171 aa).

Positions 1-18 are cleaved as a signal peptide; that stretch reads MLFNKIISLAATLATASA. N-linked (GlcNAc...) asparagine glycosylation is found at N37 and N141. 2 disulfide bridges follow: C130–C157 and C135–C142.

The protein belongs to the thaumatin family.

Its subcellular location is the secreted. The protein localises to the extracellular space. It is found in the extracellular matrix. It localises to the cell wall. Its function is as follows. Secreted thaumatin-like protein that, with cetA, plays an essential role in early conidial germination with a possible role in cell wall remodeling. The protein is Secreted thaumatin-like protein calA of Emericella nidulans (strain FGSC A4 / ATCC 38163 / CBS 112.46 / NRRL 194 / M139) (Aspergillus nidulans).